Here is a 229-residue protein sequence, read N- to C-terminus: NAD-dependent protein deacetylase (229 aa).

In terms of domain architecture, Deacetylase sirtuin-type spans 1–229; the sequence is MNKLNEALKK…SDAVKVFEEI (229 aa). NAD(+) is bound by residues alanine 20, arginine 32, glutamine 96, isoleucine 98, aspartate 99, histidine 114, threonine 181, serine 182, asparagine 205, and valine 223. Nicotinamide is bound by residues isoleucine 98 and aspartate 99. Residue histidine 114 is the Proton acceptor of the active site.

The protein belongs to the sirtuin family. Class U subfamily.

The protein resides in the cytoplasm. The enzyme catalyses N(6)-acetyl-L-lysyl-[protein] + NAD(+) + H2O = 2''-O-acetyl-ADP-D-ribose + nicotinamide + L-lysyl-[protein]. Its function is as follows. NAD-dependent protein deacetylase which modulates the activities of several enzymes which are inactive in their acetylated form. This is NAD-dependent protein deacetylase from Listeria monocytogenes serovar 1/2a (strain ATCC BAA-679 / EGD-e).